A 208-amino-acid chain; its full sequence is Na(+)-translocating NADH-quinone reductase subunit D (208 aa).

The next 5 helical transmembrane spans lie at 42 to 62, 72 to 92, 103 to 123, 131 to 151, and 178 to 198; these read IVMGISVALVTGFSSFFISLV, IIVQMAIIASLVTLVDQLLQA, VFVGLIITNCIVMGRAEAFAM, LIDGIGNGAGYGMMLLVVATV, and NGLFLLAPSAFFIIGFLIWGL.

The protein belongs to the NqrDE/RnfAE family. In terms of assembly, composed of six subunits; NqrA, NqrB, NqrC, NqrD, NqrE and NqrF.

The protein resides in the cell inner membrane. The enzyme catalyses a ubiquinone + n Na(+)(in) + NADH + H(+) = a ubiquinol + n Na(+)(out) + NAD(+). NQR complex catalyzes the reduction of ubiquinone-1 to ubiquinol by two successive reactions, coupled with the transport of Na(+) ions from the cytoplasm to the periplasm. NqrA to NqrE are probably involved in the second step, the conversion of ubisemiquinone to ubiquinol. In Neisseria gonorrhoeae (strain ATCC 700825 / FA 1090), this protein is Na(+)-translocating NADH-quinone reductase subunit D.